The primary structure comprises 514 residues: Sugar transport protein 11 (514 aa).

Topologically, residues 1–19 (MAGGAFIDESGHGGDYEGR) are cytoplasmic. The helical transmembrane segment at 20–40 (VTAFVMITCIVAAMGGLLFGY) threads the bilayer. Topologically, residues 41 to 82 (DIGISGGVISMEDFLTKFFPDVLRQMQNKRGRETEYCKYDNE) are extracellular. The helical transmembrane segment at 83–103 (LLTLFTSSLYLAALFASFLAS) threads the bilayer. Topologically, residues 104-112 (TITRLFGRK) are cytoplasmic. A helical transmembrane segment spans residues 113 to 133 (VSMVIGSLAFLSGALLNGLAI). Residues 134–137 (NLEM) are Extracellular-facing. A helical transmembrane segment spans residues 138–158 (LIIGRLFLGVGVGFANQSVPL). Residues 159 to 169 (YLSEMAPAKIR) are Cytoplasmic-facing. A helical transmembrane segment spans residues 170–190 (GALNIGFQLAITIGILAANIV). The Extracellular portion of the chain corresponds to 191 to 204 (NYVTPKLQNGIGWR). Residues 205 to 225 (LSLGLAGVPAVMMLVGCFFLP) traverse the membrane as a helical segment. Over 226–290 (DTPNSILERG…RYRPQLTFCT (65 aa)) the chain is Cytoplasmic. A helical membrane pass occupies residues 291 to 311 (FIPFFQQLTGINVIMFYAPVL). The Extracellular portion of the chain corresponds to 312–320 (FKTIGFGND). The chain crosses the membrane as a helical span at residues 321–341 (ASLISAVITGLVNVLSTIVSI). At 342 to 350 (YSVDKFGRR) the chain is on the cytoplasmic side. Residues 351–371 (ALFLQGGFQMIVTQIAVGSMI) traverse the membrane as a helical segment. Topologically, residues 372–389 (GWKFGFNGEGNLSGVDAD) are extracellular. The chain crosses the membrane as a helical span at residues 390-410 (IILALICLYVAGFAWSWGPLG). At 411–428 (WLVPSEICPLEIRSAGQS) the chain is on the cytoplasmic side. A helical transmembrane segment spans residues 429–449 (LNVSVNMFFTFFIGQFFLTML). The Extracellular portion of the chain corresponds to 450 to 453 (CHMK). The helical transmembrane segment at 454–474 (FGLFYFFAGMVLIMTIFIYFL) threads the bilayer. Over 475–514 (LPETKGVPIEEMGKVWKEHRYWGKYSNNDDGDDVDDDAYF) the chain is Cytoplasmic.

This sequence belongs to the major facilitator superfamily. Sugar transporter (TC 2.A.1.1) family. Specifically expressed in germinating pollen and pollen tube (at protein level).

The protein resides in the cell membrane. Its activity is regulated as follows. Inhibited by uncouplers such as 2,4-dinitrophenol and carbonyl cyanide-m-chlorophenyl-hydrazone. In terms of biological role, mediates an active uptake of hexoses, probably by sugar/hydrogen symport. Can transport glucose, galactose, mannose, xylose and 3-O-methylglucose, but not fructose and ribose. The protein is Sugar transport protein 11 (STP11) of Arabidopsis thaliana (Mouse-ear cress).